The chain runs to 858 residues: Transcription factor pytR (858 aa).

Residues 1–35 are disordered; that stretch reads MAHFSRVASDPSLAPQPSAPSGLDSSTTSSSSTGL. The segment at residues 39–65 is a DNA-binding region (zn(2)-C6 fungal-type); it reads CTFCRARKIRCSSGPICSACRERNINC. The segment at 72–99 is disordered; that stretch reads RKGRPRRRGTNTSNAQAKKGDQENPTLG.

It localises to the nucleus. In terms of biological role, transcription factor that regulates the expression of the gene cluster that mediates the biosynthesis of Pyranterreones, a family of antioxidative compounds. The protein is Transcription factor pytR of Aspergillus terreus (strain NIH 2624 / FGSC A1156).